The primary structure comprises 2381 residues: Highly reducing polyketide synthase virA (2381 aa).

In terms of domain architecture, Ketosynthase family 3 (KS3) spans 1-420 (MDALHLACHL…GANGHVILES (420 aa)). Active-site for beta-ketoacyl synthase activity residues include Cys-171, His-306, and His-344. A malonyl-CoA:ACP transacylase (MAT) domain region spans residues 535–851 (VFTGQGAQYA…PYSPTLVRKE (317 aa)). Catalysis depends on Ser-629, which acts as the For malonyltransferase activity. The segment at 920–1064 (HELLGTRATA…GSIRVMESTL (145 aa)) is N-terminal hotdog fold. Residues 920-1232 (HELLGTRATA…HLRMNEYTGK (313 aa)) form a dehydratase (DH) domain region. One can recognise a PKS/mFAS DH domain in the interval 920–1235 (HELLGTRATA…MNEYTGKAPV (316 aa)). Catalysis depends on His-952, which acts as the Proton acceptor; for dehydratase activity. Positions 1078 to 1235 (HEVWGMSRWY…MNEYTGKAPV (158 aa)) are C-terminal hotdog fold. Asp-1144 acts as the Proton donor; for dehydratase activity in catalysis. The interval 1639-1956 (GMTDTIHFQQ…NKDRVGKVVV (318 aa)) is enoyl reductase (ER) domain. Positions 1981 to 2159 (TYLLVGCLGG…AVSVGLGMIS (179 aa)) are ketoreductase (KR) domain. Positions 2297 to 2375 (TMLDAILRLT…TLAEFIEEKL (79 aa)) constitute a Carrier domain. Residue Ser-2334 is modified to O-(pantetheine 4'-phosphoryl)serine.

The protein operates within secondary metabolite biosynthesis. Its function is as follows. Highly reducing polyketide synthase; part of the gene cluster that mediates the biosynthesis of virensols and trichoxide, fungal natural products that contain or are derived from a salicylaldehyde core. The pathway begins with the synthesis of the reduced chain in virensol C by the highly reducing polyketide synthase virA via condensation of one acetate and 8 malonate units. VirA has interesting programming rules since the first 2 ketides are fully reduced, the 3 following ketides undergo beta-dehydration, and the last 3 ketides are only reduced to beta-hydroxys to yield the trihydroxy portion. The production of aldehyde virensol C by virA alone is surprising, since virA does not contain a reductase (R) domain that is typically associated with reductive product release in HRPKS. The cupin-domain enzyme virC is involved in enhancing virA product turnover. The short-chain dehydrogenase virB then oxidizes the C-7 alcohol of virensol C to a ketone, yielding virensol D. Virensol D is further transformed to salicylaldehyde 5-deoxyaurocitrin by the short-chain dehydrogenase virD. VirD catalyzes the dehydrogenation of C-3 to form the beta-ketone aldehyde, which is followed by the generation of the nucleophilic C-2 that is required for the intramolecular aldol condensation between C-2 and C-7, itself followed by dehydration and aromatization which leads to salicylaldehyde 5-deoxyaurocitrin. While the dehydrogenation of virensol D is definitely catalyzed by virD, the aldol condensation and dehydration may be uncatalyzed or assisted by virD. The short chain dehydrogenase virG then converts salicylaldehyde 5-deoxyaurocitrin into virensol B which is further hydroxylated by the cytochrome P450 monooxygenase virE to yield the hydroquinone virensol A. VirI then may oxidize virensol A to form the quinone, while virH performs the epoxidation. Finally, the two remaining short-chain dehydrogenases, virK and virL, are probably responsible for reducing the ketones to the corresponding alcohols to furnish the epoxycyclohexanol structure in trichoxide. The sequence is that of Highly reducing polyketide synthase virA from Hypocrea virens (strain Gv29-8 / FGSC 10586) (Gliocladium virens).